The primary structure comprises 121 residues: Small ribosomal subunit protein bS16 (121 aa).

A compositionally biased stretch (basic and acidic residues) spans 85–110; sequence REARNNPKKAEPGKKAQERAAERAAK. Residues 85–121 form a disordered region; it reads REARNNPKKAEPGKKAQERAAERAAKAAEASEAASAE. The span at 111-121 shows a compositional bias: low complexity; that stretch reads AAEASEAASAE.

It belongs to the bacterial ribosomal protein bS16 family.

In Azorhizobium caulinodans (strain ATCC 43989 / DSM 5975 / JCM 20966 / LMG 6465 / NBRC 14845 / NCIMB 13405 / ORS 571), this protein is Small ribosomal subunit protein bS16.